The following is a 224-amino-acid chain: Pro-thyrotropin-releasing hormone-B (224 aa).

The signal sequence occupies residues 1–15 (MMFLWWLLLLGTAIS). A Pyrrolidone carboxylic acid modification is found at glutamine 75. Proline amide is present on proline 77. Basic and acidic residues predominate over residues 86–101 (EKRQHPGKRDLEDLQL). 2 disordered regions span residues 86–131 (EKRQ…DWSR) and 150–212 (RQHP…NSGN). At glutamine 89 the chain carries Pyrrolidone carboxylic acid. Proline 91 is subject to Proline amide. Glutamine 105 is modified (pyrrolidone carboxylic acid). Proline 107 bears the Proline amide mark. Basic and acidic residues predominate over residues 110–129 (RYLEDMEKRQHPGKREEGDW). Glutamine 119 is subject to Pyrrolidone carboxylic acid. Position 121 is a proline amide (proline 121). A Pyrrolidone carboxylic acid modification is found at glutamine 151. Proline amide is present on proline 153. Position 166 is a pyrrolidone carboxylic acid (glutamine 166). Residue proline 168 is modified to Proline amide. The span at 182–199 (ENSKEVGKRQHPGKRYDP) shows a compositional bias: basic and acidic residues. Glutamine 191 is modified (pyrrolidone carboxylic acid). Proline 193 carries the post-translational modification Proline amide.

The protein belongs to the TRH family.

It is found in the secreted. This chain is Pro-thyrotropin-releasing hormone-B (trh-b), found in Xenopus laevis (African clawed frog).